A 266-amino-acid polypeptide reads, in one-letter code: Undecaprenyl-diphosphatase (266 aa).

8 consecutive transmembrane segments (helical) span residues 1–21 (MDTF…FLPI), 39–59 (QGLS…VIYF), 87–107 (WWII…KDFI), 114–134 (AEVI…ADKM), 149–169 (ALLI…RSGA), 183–203 (AAAR…AILV), 218–238 (ALIL…HYFL), and 246–266 (MTPF…FIFF).

This sequence belongs to the UppP family.

It localises to the cell inner membrane. The enzyme catalyses di-trans,octa-cis-undecaprenyl diphosphate + H2O = di-trans,octa-cis-undecaprenyl phosphate + phosphate + H(+). In terms of biological role, catalyzes the dephosphorylation of undecaprenyl diphosphate (UPP). Confers resistance to bacitracin. In Shewanella baltica (strain OS223), this protein is Undecaprenyl-diphosphatase.